Reading from the N-terminus, the 880-residue chain is DNA-directed RNA polymerase subunit beta C-terminal section (880 aa).

The protein belongs to the RNA polymerase beta chain family. In terms of assembly, in plastids the minimal PEP RNA polymerase catalytic core is composed of four subunits: alpha, beta, beta', and beta''. When a (nuclear-encoded) sigma factor is associated with the core the holoenzyme is formed, which can initiate transcription.

Its subcellular location is the plastid. It is found in the chloroplast. It catalyses the reaction RNA(n) + a ribonucleoside 5'-triphosphate = RNA(n+1) + diphosphate. In terms of biological role, DNA-dependent RNA polymerase catalyzes the transcription of DNA into RNA using the four ribonucleoside triphosphates as substrates. The sequence is that of DNA-directed RNA polymerase subunit beta C-terminal section (rpoB2) from Pleurastrum terricola (Filamentous green alga).